The primary structure comprises 67 residues: Large ribosomal subunit protein bL31 (67 aa).

Positions 16, 18, 38, and 41 each coordinate Zn(2+).

The protein belongs to the bacterial ribosomal protein bL31 family. Type A subfamily. As to quaternary structure, part of the 50S ribosomal subunit. Zn(2+) is required as a cofactor.

Its function is as follows. Binds the 23S rRNA. This Thioalkalivibrio sulfidiphilus (strain HL-EbGR7) protein is Large ribosomal subunit protein bL31.